A 474-amino-acid chain; its full sequence is Aspartyl/glutamyl-tRNA(Asn/Gln) amidotransferase subunit B (474 aa).

It belongs to the GatB/GatE family. GatB subfamily. In terms of assembly, heterotrimer of A, B and C subunits.

It catalyses the reaction L-glutamyl-tRNA(Gln) + L-glutamine + ATP + H2O = L-glutaminyl-tRNA(Gln) + L-glutamate + ADP + phosphate + H(+). The enzyme catalyses L-aspartyl-tRNA(Asn) + L-glutamine + ATP + H2O = L-asparaginyl-tRNA(Asn) + L-glutamate + ADP + phosphate + 2 H(+). In terms of biological role, allows the formation of correctly charged Asn-tRNA(Asn) or Gln-tRNA(Gln) through the transamidation of misacylated Asp-tRNA(Asn) or Glu-tRNA(Gln) in organisms which lack either or both of asparaginyl-tRNA or glutaminyl-tRNA synthetases. The reaction takes place in the presence of glutamine and ATP through an activated phospho-Asp-tRNA(Asn) or phospho-Glu-tRNA(Gln). The chain is Aspartyl/glutamyl-tRNA(Asn/Gln) amidotransferase subunit B from Coprothermobacter proteolyticus (strain ATCC 35245 / DSM 5265 / OCM 4 / BT).